A 256-amino-acid chain; its full sequence is Small ribosomal subunit protein eS1 (256 aa).

Positions 1–18 (MAVGKNKRLSKGKKGIKK) are enriched in basic residues. The disordered stretch occupies residues 1–20 (MAVGKNKRLSKGKKGIKKRT). At Ala2 the chain carries N-acetylalanine; partial.

This sequence belongs to the eukaryotic ribosomal protein eS1 family. Component of the small ribosomal subunit. Mature ribosomes consist of a small (40S) and a large (60S) subunit. The 40S subunit contains about 33 different proteins and 1 molecule of RNA (18S). The 60S subunit contains about 49 different proteins and 3 molecules of RNA (25S, 5.8S and 5S).

Its subcellular location is the cytoplasm. This Emericella nidulans (strain FGSC A4 / ATCC 38163 / CBS 112.46 / NRRL 194 / M139) (Aspergillus nidulans) protein is Small ribosomal subunit protein eS1 (rps1).